The following is a 462-amino-acid chain: Adenylosuccinate lyase (462 aa).

Residues 21-22 (RY), 87-89 (KHD), and 114-115 (TS) contribute to the N(6)-(1,2-dicarboxyethyl)-AMP site. His-162 serves as the catalytic Proton donor/acceptor. Position 236 (Gln-236) interacts with N(6)-(1,2-dicarboxyethyl)-AMP. Residue Ser-287 is the Proton donor/acceptor of the active site. N(6)-(1,2-dicarboxyethyl)-AMP contacts are provided by residues Ser-288, 293–295 (KRN), and 332–336 (SAERC).

The protein belongs to the lyase 1 family. Adenylosuccinate lyase subfamily. As to quaternary structure, homotetramer. Residues from neighboring subunits contribute catalytic and substrate-binding residues to each active site.

The enzyme catalyses N(6)-(1,2-dicarboxyethyl)-AMP = fumarate + AMP. The catalysed reaction is (2S)-2-[5-amino-1-(5-phospho-beta-D-ribosyl)imidazole-4-carboxamido]succinate = 5-amino-1-(5-phospho-beta-D-ribosyl)imidazole-4-carboxamide + fumarate. The protein operates within purine metabolism; AMP biosynthesis via de novo pathway; AMP from IMP: step 2/2. It functions in the pathway purine metabolism; IMP biosynthesis via de novo pathway; 5-amino-1-(5-phospho-D-ribosyl)imidazole-4-carboxamide from 5-amino-1-(5-phospho-D-ribosyl)imidazole-4-carboxylate: step 2/2. Catalyzes two reactions in de novo purine nucleotide biosynthesis. Catalyzes the breakdown of 5-aminoimidazole- (N-succinylocarboxamide) ribotide (SAICAR or 2-[5-amino-1-(5-phospho-beta-D-ribosyl)imidazole-4-carboxamido]succinate) to 5-aminoimidazole-4-carboxamide ribotide (AICAR or 5-amino-1-(5-phospho-beta-D-ribosyl)imidazole-4-carboxamide) and fumarate, and of adenylosuccinate (ADS or N(6)-(1,2-dicarboxyethyl)-AMP) to adenosine monophosphate (AMP) and fumarate. The protein is Adenylosuccinate lyase (purB) of Methanocaldococcus jannaschii (strain ATCC 43067 / DSM 2661 / JAL-1 / JCM 10045 / NBRC 100440) (Methanococcus jannaschii).